We begin with the raw amino-acid sequence, 274 residues long: Exosome complex component Rrp42 (274 aa).

This sequence belongs to the RNase PH family. Rrp42 subfamily. Component of the archaeal exosome complex. Forms a hexameric ring-like arrangement composed of 3 Rrp41-Rrp42 heterodimers. The hexameric ring associates with a trimer of Rrp4 and/or Csl4 subunits.

Its subcellular location is the cytoplasm. In terms of biological role, non-catalytic component of the exosome, which is a complex involved in RNA degradation. Contributes to the structuring of the Rrp41 active site. This is Exosome complex component Rrp42 from Pyrococcus abyssi (strain GE5 / Orsay).